The chain runs to 530 residues: Transcriptional regulator VasH (530 aa).

The Sigma-54 factor interaction domain maps to 193–422; sequence LIGESAAMQK…LKHLIEFGCA (230 aa). ATP is bound by residues 221-228 and 284-293; these read GETGTGKE and ANGGTLFLDE.

In terms of biological role, transcriptional regulator of the type VI secretion system. The protein is Transcriptional regulator VasH of Vibrio cholerae serotype O1 (strain ATCC 39315 / El Tor Inaba N16961).